We begin with the raw amino-acid sequence, 236 residues long: Peptidase E (236 aa).

Catalysis depends on charge relay system residues Ser-122, Asp-137, and His-159.

This sequence belongs to the peptidase S51 family.

The protein resides in the cytoplasm. It catalyses the reaction Dipeptidase E catalyzes the hydrolysis of dipeptides Asp-|-Xaa. It does not act on peptides with N-terminal Glu, Asn or Gln, nor does it cleave isoaspartyl peptides.. In terms of biological role, hydrolyzes dipeptides containing N-terminal aspartate residues. May play a role in allowing the cell to use peptide aspartate to spare carbon otherwise required for the synthesis of the aspartate family of amino acids. In Shewanella sp. (strain MR-4), this protein is Peptidase E.